The chain runs to 433 residues: Polygalacturonase ADPG2 (433 aa).

Positions 1-24 (MARCTNLVTVFLLWALLMFSWCKA) are cleaved as a signal peptide. 5 PbH1 repeats span residues 223–249 (CSNV…HITN), 250–271 (TQNI…SIES), 273–293 (SQNV…SIGS), 303–324 (VSGV…RIKT), and 332–353 (ASNI…IIDQ). Catalysis depends on Asp-264, which acts as the Proton donor. His-287 is an active-site residue.

It belongs to the glycosyl hydrolase 28 family. In terms of tissue distribution, expressed in roots and in the abscission zone of the sepals, petals and stamens of flowers, at the base of cauline leaves and in the basal cell of trichomes from senescing leaves. Found at the site of lateral root emergence, in the dehiscence zone of anthers and maturing siliques. Also expressed early in anther development, at the time of microspore separation. Expressed in germinating seeds, at the point at which the radicle broke through the seed coat. Not expressed at the junction between the seed and the funiculus or in the dehiscence zone of anthers or pods.

Its subcellular location is the secreted. It is found in the cell wall. It carries out the reaction (1,4-alpha-D-galacturonosyl)n+m + H2O = (1,4-alpha-D-galacturonosyl)n + (1,4-alpha-D-galacturonosyl)m.. Functionally, polygalacturonase involved in cell separation in the final stages of pod shatter, in anther dehiscence and in floral organ abscission. This is Polygalacturonase ADPG2 (ADPG2) from Arabidopsis thaliana (Mouse-ear cress).